We begin with the raw amino-acid sequence, 154 residues long: Ribosome maturation factor RimP (154 aa).

This sequence belongs to the RimP family.

The protein localises to the cytoplasm. Functionally, required for maturation of 30S ribosomal subunits. The chain is Ribosome maturation factor RimP from Clostridium kluyveri (strain ATCC 8527 / DSM 555 / NBRC 12016 / NCIMB 10680 / K1).